Reading from the N-terminus, the 382-residue chain is Queuine tRNA-ribosyltransferase (382 aa).

D96 acts as the Proton acceptor in catalysis. Residues 96 to 100 (DSGGF), D151, Q194, and G221 each bind substrate. An RNA binding region spans residues 252-258 (GVGAPDS). The active-site Nucleophile is D271. The RNA binding; important for wobble base 34 recognition stretch occupies residues 276-280 (TRIAR). Zn(2+) contacts are provided by C309, C311, C314, and H340.

This sequence belongs to the queuine tRNA-ribosyltransferase family. In terms of assembly, homodimer. Within each dimer, one monomer is responsible for RNA recognition and catalysis, while the other monomer binds to the replacement base PreQ1. It depends on Zn(2+) as a cofactor.

The catalysed reaction is 7-aminomethyl-7-carbaguanine + guanosine(34) in tRNA = 7-aminomethyl-7-carbaguanosine(34) in tRNA + guanine. It functions in the pathway tRNA modification; tRNA-queuosine biosynthesis. Its function is as follows. Catalyzes the base-exchange of a guanine (G) residue with the queuine precursor 7-aminomethyl-7-deazaguanine (PreQ1) at position 34 (anticodon wobble position) in tRNAs with GU(N) anticodons (tRNA-Asp, -Asn, -His and -Tyr). Catalysis occurs through a double-displacement mechanism. The nucleophile active site attacks the C1' of nucleotide 34 to detach the guanine base from the RNA, forming a covalent enzyme-RNA intermediate. The proton acceptor active site deprotonates the incoming PreQ1, allowing a nucleophilic attack on the C1' of the ribose to form the product. After dissociation, two additional enzymatic reactions on the tRNA convert PreQ1 to queuine (Q), resulting in the hypermodified nucleoside queuosine (7-(((4,5-cis-dihydroxy-2-cyclopenten-1-yl)amino)methyl)-7-deazaguanosine). The polypeptide is Queuine tRNA-ribosyltransferase (Lactococcus lactis subsp. lactis (strain IL1403) (Streptococcus lactis)).